We begin with the raw amino-acid sequence, 447 residues long: Tubulin beta-1 chain (447 aa).

GTP-binding residues include Gln11, Glu69, Ser138, Gly142, Thr143, Gly144, Asn204, and Asn226. Glu69 is a Mg(2+) binding site. The segment at 428 to 447 (ATADEDAEFDEEQEQEIEDN) is disordered. Positions 429-447 (TADEDAEFDEEQEQEIEDN) are enriched in acidic residues.

This sequence belongs to the tubulin family. In terms of assembly, dimer of alpha and beta chains. A typical microtubule is a hollow water-filled tube with an outer diameter of 25 nm and an inner diameter of 15 nM. Alpha-beta heterodimers associate head-to-tail to form protofilaments running lengthwise along the microtubule wall with the beta-tubulin subunit facing the microtubule plus end conferring a structural polarity. Microtubules usually have 13 protofilaments but different protofilament numbers can be found in some organisms and specialized cells. Requires Mg(2+) as cofactor.

Its subcellular location is the cytoplasm. The protein localises to the cytoskeleton. In terms of biological role, tubulin is the major constituent of microtubules, a cylinder consisting of laterally associated linear protofilaments composed of alpha- and beta-tubulin heterodimers. Microtubules grow by the addition of GTP-tubulin dimers to the microtubule end, where a stabilizing cap forms. Below the cap, tubulin dimers are in GDP-bound state, owing to GTPase activity of alpha-tubulin. The chain is Tubulin beta-1 chain from Manduca sexta (Tobacco hawkmoth).